Consider the following 81-residue polypeptide: Protein Vpu (81 aa).

At 1–7 the chain is on the extracellular side; it reads MQPLVII. A helical membrane pass occupies residues 8-28; that stretch reads AIAALVVAIIIAIVVWTIVYI. The Cytoplasmic portion of the chain corresponds to 29-81; sequence EYRRIKRQRKIDCLIDRIRERAEDSGNESEGEREELSKLVEMGHHAPWDVDDL. Residues 50 to 81 are disordered; that stretch reads AEDSGNESEGEREELSKLVEMGHHAPWDVDDL. Phosphoserine; by host CK2 is present on residues Ser-53 and Ser-57. Residues 62 to 81 show a composition bias toward basic and acidic residues; that stretch reads EELSKLVEMGHHAPWDVDDL.

It belongs to the HIV-1 VPU protein family. In terms of assembly, homopentamer. Interacts with host CD4 and BRTC; these interactions induce proteasomal degradation of CD4. Interacts with host BST2; this interaction leads to the degradation of host BST2. Interacts with host FBXW11. Interacts with host AP1M1; this interaction plays a role in the mistrafficking and subsequent degradation of host BST2. Interacts with host RANBP2; this interaction allows Vpu to down-regulate host BLM sumoylation. In terms of processing, phosphorylated by host CK2. This phosphorylation is necessary for interaction with human BTRC and degradation of CD4.

It localises to the host membrane. Ion channel activity is inhibited by hexamethylene amiloride in vitro. Its function is as follows. Enhances virion budding by targeting host CD4 and Tetherin/BST2 to proteasome degradation. Degradation of CD4 prevents any unwanted premature interactions between viral Env and its host receptor CD4 in the endoplasmic reticulum. Degradation of antiretroviral protein Tetherin/BST2 is important for virion budding, as BST2 tethers new viral particles to the host cell membrane. Mechanistically, Vpu bridges either CD4 or BST2 to BTRC, a substrate recognition subunit of the Skp1/Cullin/F-box protein E3 ubiquitin ligase, induces their ubiquitination and subsequent proteasomal degradation. The alteration of the E3 ligase specificity by Vpu seems to promote the degradation of host IKBKB, leading to NF-kappa-B down-regulation and subsequent apoptosis. Acts as a viroporin that forms an oligomeric ion channel in membranes. Modulates the host DNA repair mechanisms to promote degradation of nuclear viral cDNA in cells that are already productively infected in order to suppress immune sensing and proviral hyper-integration (superinfection). Manipulates PML-NBs and modulates SUMOylation of host BLM protein thereby enhancing its DNA-end processing activity toward viral unintegrated linear DNA. Also inhibits RAD52-mediated homologous repair of viral cDNA, preventing the generation of dead-end circular forms of single copies of the long terminal repeat and permitting sustained nucleolytic attack. In Human immunodeficiency virus type 1 group M subtype D (isolate NDK) (HIV-1), this protein is Protein Vpu.